The chain runs to 447 residues: Methylenetetrahydrofolate--tRNA-(uracil-5-)-methyltransferase TrmFO (447 aa).

13–18 is an FAD binding site; that stretch reads GAGLAG.

Belongs to the MnmG family. TrmFO subfamily. The cofactor is FAD.

The protein resides in the cytoplasm. It catalyses the reaction uridine(54) in tRNA + (6R)-5,10-methylene-5,6,7,8-tetrahydrofolate + NADH + H(+) = 5-methyluridine(54) in tRNA + (6S)-5,6,7,8-tetrahydrofolate + NAD(+). The catalysed reaction is uridine(54) in tRNA + (6R)-5,10-methylene-5,6,7,8-tetrahydrofolate + NADPH + H(+) = 5-methyluridine(54) in tRNA + (6S)-5,6,7,8-tetrahydrofolate + NADP(+). Its function is as follows. Catalyzes the folate-dependent formation of 5-methyl-uridine at position 54 (M-5-U54) in all tRNAs. The polypeptide is Methylenetetrahydrofolate--tRNA-(uracil-5-)-methyltransferase TrmFO (Streptococcus thermophilus (strain ATCC BAA-250 / LMG 18311)).